A 557-amino-acid chain; its full sequence is Dihydroxy-acid dehydratase (557 aa).

Residue Asp-78 participates in Mg(2+) binding. Cys-119 contributes to the [2Fe-2S] cluster binding site. Asp-120 and Lys-121 together coordinate Mg(2+). An N6-carboxylysine modification is found at Lys-121. Residue Cys-192 coordinates [2Fe-2S] cluster. Glu-443 is a binding site for Mg(2+). The active-site Proton acceptor is the Ser-469.

The protein belongs to the IlvD/Edd family. In terms of assembly, homodimer. It depends on [2Fe-2S] cluster as a cofactor. The cofactor is Mg(2+).

It catalyses the reaction (2R)-2,3-dihydroxy-3-methylbutanoate = 3-methyl-2-oxobutanoate + H2O. The enzyme catalyses (2R,3R)-2,3-dihydroxy-3-methylpentanoate = (S)-3-methyl-2-oxopentanoate + H2O. It functions in the pathway amino-acid biosynthesis; L-isoleucine biosynthesis; L-isoleucine from 2-oxobutanoate: step 3/4. Its pathway is amino-acid biosynthesis; L-valine biosynthesis; L-valine from pyruvate: step 3/4. Functions in the biosynthesis of branched-chain amino acids. Catalyzes the dehydration of (2R,3R)-2,3-dihydroxy-3-methylpentanoate (2,3-dihydroxy-3-methylvalerate) into 2-oxo-3-methylpentanoate (2-oxo-3-methylvalerate) and of (2R)-2,3-dihydroxy-3-methylbutanoate (2,3-dihydroxyisovalerate) into 2-oxo-3-methylbutanoate (2-oxoisovalerate), the penultimate precursor to L-isoleucine and L-valine, respectively. This is Dihydroxy-acid dehydratase from Sulfurihydrogenibium sp. (strain YO3AOP1).